We begin with the raw amino-acid sequence, 452 residues long: Peptidase M20 domain-containing protein SMAC_03666.2 (452 aa).

The first 28 residues, 1 to 28 (MKATSNLLLLWGTSLLSPSSAFVIDNHH), serve as a signal peptide directing secretion. An N-linked (GlcNAc...) asparagine glycan is attached at asparagine 140. Aspartate 186 contacts Zn(2+). Glutamate 220 acts as the Proton acceptor in catalysis. Position 221 (glutamate 221) interacts with Zn(2+). An N-linked (GlcNAc...) asparagine glycan is attached at asparagine 315.

This sequence belongs to the peptidase M20A family. Requires Zn(2+) as cofactor.

The protein localises to the secreted. In Sordaria macrospora (strain ATCC MYA-333 / DSM 997 / K(L3346) / K-hell), this protein is Peptidase M20 domain-containing protein SMAC_03666.2.